A 368-amino-acid polypeptide reads, in one-letter code: 3-dehydroquinate synthase (368 aa).

Residues aspartate 80–lysine 85, glycine 114–aspartate 118, threonine 138–threonine 139, lysine 151, and lysine 160 contribute to the NAD(+) site. Zn(2+) is bound by residues glutamate 193, histidine 255, and histidine 271.

This sequence belongs to the sugar phosphate cyclases superfamily. Dehydroquinate synthase family. The cofactor is Co(2+). It depends on Zn(2+) as a cofactor. NAD(+) is required as a cofactor.

It localises to the cytoplasm. It catalyses the reaction 7-phospho-2-dehydro-3-deoxy-D-arabino-heptonate = 3-dehydroquinate + phosphate. The protein operates within metabolic intermediate biosynthesis; chorismate biosynthesis; chorismate from D-erythrose 4-phosphate and phosphoenolpyruvate: step 2/7. Its function is as follows. Catalyzes the conversion of 3-deoxy-D-arabino-heptulosonate 7-phosphate (DAHP) to dehydroquinate (DHQ). The polypeptide is 3-dehydroquinate synthase (Corynebacterium jeikeium (strain K411)).